Reading from the N-terminus, the 364-residue chain is Dual-specificity RNA methyltransferase RlmN (364 aa).

Glu-91 acts as the Proton acceptor in catalysis. The region spanning 97-333 (ESDRGTLCIS…VTVRKTRGDD (237 aa)) is the Radical SAM core domain. A disulfide bond links Cys-104 and Cys-338. Residues Cys-111, Cys-115, and Cys-118 each contribute to the [4Fe-4S] cluster site. S-adenosyl-L-methionine is bound by residues 164 to 165 (GE), Ser-196, 218 to 220 (SLH), and Asn-295. Catalysis depends on Cys-338, which acts as the S-methylcysteine intermediate.

Belongs to the radical SAM superfamily. RlmN family. [4Fe-4S] cluster is required as a cofactor.

It is found in the cytoplasm. The enzyme catalyses adenosine(2503) in 23S rRNA + 2 reduced [2Fe-2S]-[ferredoxin] + 2 S-adenosyl-L-methionine = 2-methyladenosine(2503) in 23S rRNA + 5'-deoxyadenosine + L-methionine + 2 oxidized [2Fe-2S]-[ferredoxin] + S-adenosyl-L-homocysteine. It catalyses the reaction adenosine(37) in tRNA + 2 reduced [2Fe-2S]-[ferredoxin] + 2 S-adenosyl-L-methionine = 2-methyladenosine(37) in tRNA + 5'-deoxyadenosine + L-methionine + 2 oxidized [2Fe-2S]-[ferredoxin] + S-adenosyl-L-homocysteine. Functionally, specifically methylates position 2 of adenine 2503 in 23S rRNA and position 2 of adenine 37 in tRNAs. m2A2503 modification seems to play a crucial role in the proofreading step occurring at the peptidyl transferase center and thus would serve to optimize ribosomal fidelity. The polypeptide is Dual-specificity RNA methyltransferase RlmN (Neisseria meningitidis serogroup C / serotype 2a (strain ATCC 700532 / DSM 15464 / FAM18)).